Reading from the N-terminus, the 368-residue chain is Peptide chain release factor 2 (368 aa).

At Gln-249 the chain carries N5-methylglutamine.

This sequence belongs to the prokaryotic/mitochondrial release factor family. In terms of processing, methylated by PrmC. Methylation increases the termination efficiency of RF2.

Its subcellular location is the cytoplasm. In terms of biological role, peptide chain release factor 2 directs the termination of translation in response to the peptide chain termination codons UGA and UAA. The polypeptide is Peptide chain release factor 2 (Rhodococcus jostii (strain RHA1)).